A 1028-amino-acid polypeptide reads, in one-letter code: Contactin-3 (1028 aa).

Positions 1–19 (MMLSWKQLILLSFIGCLAG) are cleaved as a signal peptide. 6 Ig-like C2-type domains span residues 32–117 (PSNS…AKLQ), 122–209 (ENFK…RVLG), 227–313 (PKIE…GRLT), 318–402 (PYWL…AELK), 408–497 (PDFS…LVVT), and 499–593 (PTRI…AELI). Disulfide bonds link C50–C100, C144–C196, C249–C297, C339–C386, and C431–C479. N-linked (GlcNAc...) asparagine glycosylation is found at N65 and N193. N377, N468, and N489 each carry an N-linked (GlcNAc...) asparagine glycan. A disulfide bridge connects residues C521 and C577. Fibronectin type-III domains are found at residues 600–698 (PPEN…TEEA), 703–800 (APSE…SAEE), 805–901 (APSH…TKKT), and 902–998 (PPSQ…TSMD). Residues 684–714 (GEPSLPSEKVRTEEAAPEIAPSEVSGGGGSR) are disordered. Residues N765, N860, N895, N913, N931, and N956 are each glycosylated (N-linked (GlcNAc...) asparagine). Residue S1002 is the site of GPI-anchor amidated serine attachment. A propeptide spans 1003-1028 (TSAISNIHPLSGYMSVLLFFIVNALW) (removed in mature form).

The protein belongs to the immunoglobulin superfamily. Contactin family. Interacts with PTPRG. In terms of tissue distribution, specifically expressed in brain. Ectopically expressed in tumors expressing endogenous intracisternal A-type particles (IAPs).

Its subcellular location is the cell membrane. In terms of biological role, contactins mediate cell surface interactions during nervous system development. Has some neurite outgrowth-promoting activity. In Mus musculus (Mouse), this protein is Contactin-3 (Cntn3).